We begin with the raw amino-acid sequence, 98 residues long: Large ribosomal subunit protein uL23 (98 aa).

This sequence belongs to the universal ribosomal protein uL23 family. In terms of assembly, part of the 50S ribosomal subunit. Contacts protein L29, and trigger factor when it is bound to the ribosome.

Functionally, one of the early assembly proteins it binds 23S rRNA. One of the proteins that surrounds the polypeptide exit tunnel on the outside of the ribosome. Forms the main docking site for trigger factor binding to the ribosome. This chain is Large ribosomal subunit protein uL23, found in Roseobacter denitrificans (strain ATCC 33942 / OCh 114) (Erythrobacter sp. (strain OCh 114)).